Consider the following 490-residue polypeptide: Mitochondrial-processing peptidase subunit beta (490 aa).

A mitochondrion-targeting transit peptide spans 1 to 46 (MAAAAVARAVLFSAARRRLCGFTERLLIGGAAGRSLYFGGNRLRST). His102 is a binding site for Zn(2+). Glu105 acts as the Proton acceptor in catalysis. Residues His106 and Glu182 each contribute to the Zn(2+) site.

This sequence belongs to the peptidase M16 family. Heterodimer of PMPCA (alpha) and PMPCB (beta) subunits, forming the mitochondrial processing protease (MPP) in which PMPCA is involved in substrate recognition and binding and PMPCB is the catalytic subunit. Zn(2+) serves as cofactor.

It localises to the mitochondrion matrix. The enzyme catalyses Release of N-terminal transit peptides from precursor proteins imported into the mitochondrion, typically with Arg in position P2.. With respect to regulation, binding to PMPCA is required for catalytic activity. Functionally, catalytic subunit of the essential mitochondrial processing protease (MPP), which cleaves the mitochondrial sequence off newly imported precursors proteins. Preferentially, cleaves after an arginine at position P2. Required for PINK1 turnover by coupling PINK1 mitochondrial import and cleavage, which results in subsequent PINK1 proteolysis. The polypeptide is Mitochondrial-processing peptidase subunit beta (PMPCB) (Bos taurus (Bovine)).